We begin with the raw amino-acid sequence, 81 residues long: Small cysteine-rich protein 1 1 (81 aa).

The signal sequence occupies residues 1 to 19 (MGVHFNICLLLLLVATISS). Residues 20 to 39 (QTLKATEKDDSTDENPFGIY) constitute a propeptide that is removed on maturation.

It belongs to the Cnidaria small cysteine-rich protein (SCRiP) family. alpha subfamily. Post-translationally, the basic myotoxic domain of rattlesnake crotamine toxins (with 6 Cys residues) has been detected in this protein. However, this protein contains 2 additional Cys at the C-terminal region. Hence, this protein may contain 4 disulfide bonds instead of the 3 suggested by the myotoxin domain.

It localises to the secreted. Its subcellular location is the nematocyst. Induces neurotoxic symptoms on zebrafish. Has also been claimed to be implied in calcification, but tests on homolog proteins suggest that proteins of this family have a neurotoxic function and not a calcification function. In Montipora capitata (Rice coral), this protein is Small cysteine-rich protein 1 1.